The following is a 129-amino-acid chain: DNA-directed RNA polymerase subunit omega (129 aa).

The disordered stretch occupies residues 76–101 (EVDEPEPDPVTLAASAADGEDDDQPE).

The protein belongs to the RNA polymerase subunit omega family. As to quaternary structure, the RNAP catalytic core consists of 2 alpha, 1 beta, 1 beta' and 1 omega subunit. When a sigma factor is associated with the core the holoenzyme is formed, which can initiate transcription.

The enzyme catalyses RNA(n) + a ribonucleoside 5'-triphosphate = RNA(n+1) + diphosphate. Its function is as follows. Promotes RNA polymerase assembly. Latches the N- and C-terminal regions of the beta' subunit thereby facilitating its interaction with the beta and alpha subunits. This is DNA-directed RNA polymerase subunit omega from Agrobacterium fabrum (strain C58 / ATCC 33970) (Agrobacterium tumefaciens (strain C58)).